A 232-amino-acid polypeptide reads, in one-letter code: Transcriptional regulatory protein CpxR (232 aa).

Residues 3 to 115 enclose the Response regulatory domain; that stretch reads KILLVDDDRE…ELVARIRAIL (113 aa). Asp-51 is modified (4-aspartylphosphate). A DNA-binding region (ompR/PhoB-type) is located at residues 131-230; it reads SPTLEVDALS…LRGRGYLMVS (100 aa).

Interacts with cognate sensor kinase CpxA. Phosphorylated by CpxA.

The protein resides in the cytoplasm. Its activity is regulated as follows. The two-component system is activated by envelope stress such as overexpression of some (misfolded) periplasmic proteins. Its function is as follows. Response regulator member of the two-component regulatory system CpxA/CpxR which responds to envelope stress response by activating or, in some cases, repressing expression of downstream genes. Binds to the promoter regions of various genes in vitro, including ompC, cpxP, ryhB and mrkA and, when CpxR is phosphorylated, pecO. Represses expression of the major pilin of type 3 fimbriae MrkA as well as that of type 1 fimbriae FimA. Repression of expression of MrkA appears to be indirect, mediated by activation of the iron homeostasis regulator RyhB. In Klebsiella pneumoniae subsp. pneumoniae (strain HS11286), this protein is Transcriptional regulatory protein CpxR.